We begin with the raw amino-acid sequence, 509 residues long: MDNMGKDKNILKIRANLIKYIDVDEIEELPKVKVKNVEEFLEAHRVLGKHVICRYKDNLEDIFFFVDNGVIFYIPSDGFKTLEDLIEAKSLGLSAEEYYEYLEFGDINEYKKYKSSGFKSIEEYKKAKDLGFIGGLEELVKEGIAQRLDDKYIIEYLYYGILENREFSNDAELYYFAIEKGFSDFDELKNALKAGFGDANEYKDALNRGFKDAYEYNDALSKGFRDADEYKIAKAIGVNSKKELEEYMELKRICENFGLETFEEGYLLKVLMDLKIDEEITLKELYNKLKEKERLMKIKKDVLNKLANLSSPSWYSTRFTTVDDLEEYLVDSEIVSYLGEYIKEEKIFRRIYPPKPSRRIVIIDAISVLNNMHNLSPNSIENLIKKIKNAGFKNIITVMDTVTYYKIKGKDICRFLANECNIKVSKSKDEAYKLIIEYIKNFGALVISNASFKDYIIKDSKLFYKDIKEYIIPFIVENGEINLDIELLRKLYTEVVTKRIEKIKSNVVS.

The RNase NYN domain maps to 358-480 (RRIVIIDAIS…IIPFIVENGE (123 aa)).

This is an uncharacterized protein from Methanocaldococcus jannaschii (strain ATCC 43067 / DSM 2661 / JAL-1 / JCM 10045 / NBRC 100440) (Methanococcus jannaschii).